A 278-amino-acid polypeptide reads, in one-letter code: MRLGKHVSIAGGLYKATDRATKIGCNALQIFVKNPRGWKIKEVSDSEIKKLKDNIKKENMYPLVVHSSYLINMATPRDELWEKSVNSLKKEYKRTELINADYFVVHPGSHTGKGLHFGINRIIEAINSVFGEVKNGPQLLLENVAGAGSSIGSNFTELRDIINKVDDYARIGVCLDTCHAFAAGYDLRYEDGLEELLNDFDKIIGLDLLKVIHLNDSKYGLASNKDEHAHIGEGEIGEKGISNIINHPLLKDKPFILETPKFSGRDKDVELVNLLRRD.

Zn(2+) contacts are provided by His66, His106, Glu142, Asp176, His179, His213, Asp226, His228, and Glu258.

This sequence belongs to the AP endonuclease 2 family. Zn(2+) serves as cofactor.

It catalyses the reaction Endonucleolytic cleavage to 5'-phosphooligonucleotide end-products.. Its function is as follows. Endonuclease IV plays a role in DNA repair. It cleaves phosphodiester bonds at apurinic or apyrimidinic (AP) sites, generating a 3'-hydroxyl group and a 5'-terminal sugar phosphate. The protein is Probable endonuclease 4 of Halothermothrix orenii (strain H 168 / OCM 544 / DSM 9562).